We begin with the raw amino-acid sequence, 570 residues long: Sulfite reductase [NADPH] hemoprotein beta-component (570 aa).

[4Fe-4S] cluster is bound by residues C434, C440, C479, and C483. A siroheme-binding site is contributed by C483.

The protein belongs to the nitrite and sulfite reductase 4Fe-4S domain family. In terms of assembly, alpha(8)-beta(8). The alpha component is a flavoprotein, the beta component is a hemoprotein. It depends on siroheme as a cofactor. The cofactor is [4Fe-4S] cluster.

The enzyme catalyses hydrogen sulfide + 3 NADP(+) + 3 H2O = sulfite + 3 NADPH + 4 H(+). Its pathway is sulfur metabolism; hydrogen sulfide biosynthesis; hydrogen sulfide from sulfite (NADPH route): step 1/1. Its function is as follows. Component of the sulfite reductase complex that catalyzes the 6-electron reduction of sulfite to sulfide. This is one of several activities required for the biosynthesis of L-cysteine from sulfate. This Escherichia coli (strain SMS-3-5 / SECEC) protein is Sulfite reductase [NADPH] hemoprotein beta-component.